Here is a 127-residue protein sequence, read N- to C-terminus: Probable tautomerase YusQ (127 aa).

The active-site Proton acceptor; via imino nitrogen is the P2.

Belongs to the 4-oxalocrotonate tautomerase family.

The sequence is that of Probable tautomerase YusQ (yusQ) from Bacillus subtilis (strain 168).